We begin with the raw amino-acid sequence, 323 residues long: Estradiol 17 beta-dehydrogenase 5 (323 aa).

NADP(+)-binding positions include 20-24 and D50; that span reads GFGTY. Residue Y55 is the Proton donor of the active site. Residue H117 participates in substrate binding. NADP(+)-binding positions include 166–167, Q190, 216–221, and 270–280; these read SN, YSALGS, and KSFSEKRIKEN.

Belongs to the aldo/keto reductase family. Monomer. Three forms are detected, probably due to post-translational modifications. In terms of tissue distribution, mainly found in liver. Also expressed weakly in kidney.

Its function is as follows. Active toward androgens, estrogens, and xenobiotic substrates. Also exhibits low 20 alpha-HSD activity. Shows a-stereospecificity in hydrogen transfer between cofactors and substrates (A-specific). Preferentially catalyzes the reduction of 4-androstenedione, 5-alpha-androstane-3,17-dione, androsterone and dehydroepiandrosterone to testosterone, dihydrotestosterone, 5-alpha-androstane-3-alpha,17-beta-diol and 5-androstene-3-beta,17-beta-diol, respectively. The chain is Estradiol 17 beta-dehydrogenase 5 (Akr1c6) from Mus musculus (Mouse).